Reading from the N-terminus, the 312-residue chain is MKVAVLGAAGGIGQALALLLKTQLPSGSELSLYDIAPVTPGVAVDLSHIPTAVKIKGYSGEDAKPALAGADIVLISAGVARKPGMDRSDLFNVNAGIVRNLVEQIAVTCPKACIGIITNPVNTTVAIAAEVLKKAGVYDKNKLFGVTTLDIIRSNTFVAELKGKQPQDINVPVIGGHSGVTILPLLSQVPGISFSEQEVADLTKRIQNAGTEVVEAKAGGGSATLSMGQAAARFGLSLVRALQGESGVVECAYVESDGKHARFFAQPVLLGKDGVVERKDIGTLSAFEQNALSSMLDTLKQDIELGETFIKN.

Residues 7 to 13 (GAAGGIG) and Asp-34 contribute to the NAD(+) site. Substrate is bound by residues Arg-81 and Arg-87. Residues Asn-94 and 117–119 (ITN) contribute to the NAD(+) site. Substrate contacts are provided by Asn-119 and Arg-153. His-177 acts as the Proton acceptor in catalysis. Met-227 is an NAD(+) binding site.

Belongs to the LDH/MDH superfamily. MDH type 1 family. Homodimer.

The enzyme catalyses (S)-malate + NAD(+) = oxaloacetate + NADH + H(+). Catalyzes the reversible oxidation of malate to oxaloacetate. The chain is Malate dehydrogenase from Pectobacterium carotovorum subsp. carotovorum (strain PC1).